A 425-amino-acid polypeptide reads, in one-letter code: Formyl-CoA:oxalate CoA-transferase (425 aa).

Residues 17–18, Arg38, 72–75, 96–98, Arg104, and 136–139 each bind CoA; these read QS, LDTK, NFG, and KVYE. Asp168 (nucleophile) is an active-site residue. 247–249 is a binding site for substrate; the sequence is GGQ.

This sequence belongs to the CoA-transferase III family. Frc subfamily. As to quaternary structure, homodimer.

It carries out the reaction formyl-CoA + oxalate = oxalyl-CoA + formate. It functions in the pathway metabolic intermediate degradation; oxalate degradation; CO(2) and formate from oxalate: step 1/2. Functionally, involved in the catabolism of oxalate and in the adapatation to low pH via the induction of the oxalate-dependent acid tolerance response (ATR). Catalyzes the transfer of the CoA moiety from formyl-CoA to oxalate. The sequence is that of Formyl-CoA:oxalate CoA-transferase from Rhodopseudomonas palustris (strain TIE-1).